The sequence spans 343 residues: 3-hydroxy-3-methylglutaryl-CoA lyase, cytoplasmic (343 aa).

Gly-2 carries the N-myristoyl glycine lipid modification. The 268-residue stretch at 48–315 folds into the Pyruvate carboxyltransferase domain; that stretch reads VKIVEVGPRD…NTGVDLHKVM (268 aa). Substrate is bound at residue Arg-56. Asp-57, His-248, and His-250 together coordinate a divalent metal cation. The active site involves Cys-281. Position 290 (Asn-290) interacts with a divalent metal cation.

The protein belongs to the HMG-CoA lyase family. The cofactor is a divalent metal cation. In terms of tissue distribution, present at high level in duodenum and small intestine (at protein level).

Its subcellular location is the cytoplasm. It is found in the cytosol. The protein resides in the endoplasmic reticulum membrane. The enzyme catalyses (3S)-3-hydroxy-3-methylglutaryl-CoA = acetoacetate + acetyl-CoA. The protein operates within metabolic intermediate metabolism; (S)-3-hydroxy-3-methylglutaryl-CoA degradation; acetoacetate from (S)-3-hydroxy-3-methylglutaryl-CoA: step 1/1. Its function is as follows. Non-mitochondrial 3-hydroxy-3-methylglutaryl-CoA lyase that catalyzes a cation-dependent cleavage of (S)-3-hydroxy-3-methylglutaryl-CoA into acetyl-CoA and acetoacetate, a key step in ketogenesis, the products of which support energy production in nonhepatic animal tissues. This is 3-hydroxy-3-methylglutaryl-CoA lyase, cytoplasmic (Hmgcll1) from Rattus norvegicus (Rat).